The sequence spans 314 residues: Olfactory receptor 52K1 (314 aa).

Residues 1–27 (MLPSNITSTHPAVFLLVGIPGLEHLHA) are Extracellular-facing. An N-linked (GlcNAc...) asparagine glycan is attached at Asn5. Residues 28-48 (WISIPFCFAYTLALLGNCTLL) form a helical membrane-spanning segment. Over 49 to 56 (FIIQADAA) the chain is Cytoplasmic. A helical transmembrane segment spans residues 57 to 77 (LHEPMYLFLAMLATIDLVLSS). Residues 78-101 (TTLPKMLAIFWFRDQEINFFACLV) lie on the Extracellular side of the membrane. Cys99 and Cys191 are oxidised to a cystine. The helical transmembrane segment at 102-122 (QMFFLHSFSIMESAVLLAMAF) threads the bilayer. The Cytoplasmic portion of the chain corresponds to 123-141 (DRYVAICKPLHYTTVLTGS). A helical transmembrane segment spans residues 142–162 (LITKIGMAAVARAVTLMTPLP). Residues 163-198 (FLLRRFHYCRGPVIAHCYCEHMAVVRLACGDTSFNN) are Extracellular-facing. The helical transmembrane segment at 199 to 219 (IYGIAVAMFIVVLDLLFVILS) threads the bilayer. Over 220-239 (YVFILQAVLQLASQEARYKA) the chain is Cytoplasmic. Residues 240-260 (FGTCVSHIGAILSTYTPVVIS) form a helical membrane-spanning segment. The Extracellular segment spans residues 261-275 (SVMHRVARHAAPRVH). A helical transmembrane segment spans residues 276–296 (ILLAIFYLLFPPMVNPIIYGV). At 297–314 (KTKQIREYVLSLFQRKNM) the chain is on the cytoplasmic side.

The protein belongs to the G-protein coupled receptor 1 family.

It is found in the cell membrane. Odorant receptor. This chain is Olfactory receptor 52K1 (OR52K1), found in Homo sapiens (Human).